Reading from the N-terminus, the 1905-residue chain is von Willebrand factor A domain-containing protein 8 (1905 aa).

Residues 1-45 (MQSRLLLLGAPGGLGDVASRRVRLLLRQVLRGRPGGDQQRLEVRL) constitute a mitochondrion transit peptide. The tract at residues 1–260 (MQSRLLLLGA…PLDPPLRSRF (260 aa)) is interaction with PEX7. 446 to 453 (GGKGCGKT) contacts ATP. Basic and acidic residues predominate over residues 1541–1560 (ERDSNEDVSDPKHGKEDPDN). The interval 1541-1583 (ERDSNEDVSDPKHGKEDPDNMPHVGGNTWAGGTGGRDTAGLGG) is disordered. Residues 1568–1583 (TWAGGTGGRDTAGLGG) show a composition bias toward gly residues. One can recognise a VWFA domain in the interval 1714 to 1896 (RLRLVVDVSG…KKIPQILQQI (183 aa)).

In terms of assembly, monomer. Interacts with PEX7. Interacts with PEX5 in a PEX7-dependent manner. Isoform 1 is predominantly expressed in liver, kidney, pancreas, heart, and skeletal muscle (at protein level).

The protein localises to the mitochondrion. Exhibits ATPase activity in vitro. The polypeptide is von Willebrand factor A domain-containing protein 8 (Vwa8) (Mus musculus (Mouse)).